The primary structure comprises 379 residues: Putative zinc metalloprotease BR1156/BS1330_I1152 (379 aa).

His-33 provides a ligand contact to Zn(2+). Residue Glu-34 is part of the active site. Position 37 (His-37) interacts with Zn(2+). 4 consecutive transmembrane segments (helical) span residues 39–61, 122–144, 305–327, and 355–377; these read LVAR…ELLG, VFAG…FALY, FDWL…LFPL, and IFYR…NDLF. One can recognise a PDZ domain in the interval 133 to 208; sequence TIAIFSVFFA…LNFTVERDGK (76 aa).

This sequence belongs to the peptidase M50B family. Requires Zn(2+) as cofactor.

It localises to the cell inner membrane. The polypeptide is Putative zinc metalloprotease BR1156/BS1330_I1152 (Brucella suis biovar 1 (strain 1330)).